Reading from the N-terminus, the 428-residue chain is Enolase (428 aa).

Residue glutamine 162 coordinates (2R)-2-phosphoglycerate. Glutamate 204 serves as the catalytic Proton donor. 3 residues coordinate Mg(2+): aspartate 241, glutamate 282, and aspartate 309. 4 residues coordinate (2R)-2-phosphoglycerate: lysine 334, arginine 363, serine 364, and lysine 385. Catalysis depends on lysine 334, which acts as the Proton acceptor.

The protein belongs to the enolase family. Mg(2+) serves as cofactor.

The protein localises to the cytoplasm. Its subcellular location is the secreted. The protein resides in the cell surface. It catalyses the reaction (2R)-2-phosphoglycerate = phosphoenolpyruvate + H2O. Its pathway is carbohydrate degradation; glycolysis; pyruvate from D-glyceraldehyde 3-phosphate: step 4/5. In terms of biological role, catalyzes the reversible conversion of 2-phosphoglycerate (2-PG) into phosphoenolpyruvate (PEP). It is essential for the degradation of carbohydrates via glycolysis. The chain is Enolase from Mycobacterium marinum (strain ATCC BAA-535 / M).